The sequence spans 147 residues: Hemoglobin subunit gamma-1 (147 aa).

The 145-residue stretch at 3 to 147 (NFTAEDKAAI…VASALGSRYH (145 aa)) folds into the Globin domain. Residue Thr-13 is modified to Phosphothreonine. Phosphoserine occurs at positions 45, 51, and 53. The residue at position 60 (Lys-60) is an N6-acetyllysine. Residue His-64 participates in heme b binding. Position 83 is an N6-acetyllysine (Lys-83). Residue His-93 coordinates heme b. Residue Cys-94 is modified to S-nitrosocysteine. Ser-140 carries the phosphoserine modification.

Belongs to the globin family. As to quaternary structure, heterotetramer of two alpha chains and two gamma chains in fetal hemoglobin (Hb F). Red blood cells.

In terms of biological role, gamma chains make up the fetal hemoglobin F, in combination with alpha chains. The protein is Hemoglobin subunit gamma-1 (HBG1) of Sapajus apella (Brown-capped capuchin).